A 599-amino-acid chain; its full sequence is Endoribonuclease ZC3H12A (599 aa).

Positions 1-40 (MSGPCGEKPVLEASPTMSLWEFEDSHSRQGTPRPGQELAA) are disordered. The interval 42-87 (EASALELQMKVDFFRKLGYSSTEIHSVLQKLGVQADTNTVLGELVK) is ubiquitin association domain. The segment at 81-150 (VLGELVKHGT…DGSNVAMSHG (70 aa)) is necessary for interaction with TANK. Residues 90–133 (TATERERQTSPDPCPQLPLVPRGGGTPKAPNLEPPLPEEEKEGS) are disordered. A Phosphoserine modification is found at serine 99. The segment at 112 to 297 (GGGTPKAPNL…LDNFLRKKPL (186 aa)) is RNase. Positions 135 to 290 (LRPVVIDGSN…LGRHGPSLDN (156 aa)) constitute an RNase NYN domain. Residues 214–220 (RRVGGKR) form an RNA binding region. A Mg(2+)-binding site is contributed by aspartate 226. The C3H1-type zinc finger occupies 301–324 (HRKQPCPYGRKCTYGIKCRFFHPE). The segment at 301–457 (HRKQPCPYGR…SELWGVRGGG (157 aa)) is necessary for interaction with ZC3H12D. The disordered stretch occupies residues 343 to 420 (LSPPRAPSKD…SGSSFGPTDW (78 aa)). Phosphoserine is present on serine 344. Residues 358-375 (PSPSSQSSSLLTESEQCS) are compositionally biased toward low complexity. Polar residues predominate over residues 386 to 399 (SPGSRQEGLTQTYA). 2 positions are modified to phosphoserine: serine 438 and serine 442. Positions 522 to 546 (PPPTSVLQEPPVQSPGAGRSPWGRA) are disordered.

It belongs to the ZC3H12 family. Oligomer. Found in a deubiquitination complex with TANK, USP10 and ZC3H12A; this complex inhibits genotoxic stress- or interleukin-1-beta-mediated NF-kappaB activation by promoting IKBKG or TRAF6 deubiquitination. Interacts with IKBKG; this interaction increases in response to DNA damage. Interacts with TANK; this interaction increases in response to DNA damage and serves as a bridge to anchor both TANK and USP10 into a deubiquitinating complex. Interacts with TRAF6; this interaction increases in response to DNA damage and is stimulated by TANK. Interacts with USP10; this interaction increases in response to DNA damage and serves as a bridge to anchor both TANK and USP10 into a deubiquitinating complex. Interacts with ZC3H12D. Interacts with TNRC6A. Interacts with IKBKB/IKKB. Interacts with IKBKB/IKKB. Interacts with BTRC; the interaction occurs when ZC3H12A is phosphorylated in a IKBKB/IKKB-dependent manner. Interacts with IRAK1; this interaction increases the interaction between ZC3H12A and IKBKB/IKKB. Interacts with UPF1; this interaction occurs in a mRNA translationally active- and termination-dependent manner and is essential for ZC3H12A-mediated degradation of target mRNAs. Associates with ribosomes. Interacts with ubiquitin. As to quaternary structure, (Microbial infection) Oligomerization is necessary for antiviral activity. Mg(2+) is required as a cofactor. Post-translationally, phosphorylated by IRAK1; phosphorylation is necessary for subsequent phosphorylation by the I-kappa-B-kinase (IKK) complex. Phosphorylated by I-kappa-B-kinase (IKK) subunits IKBKB/IKKB and CHUK/IKKA at Ser-438 and Ser-442; these phosphorylations promote ubiquitin proteasome-mediated degradation of ZC3H12A and hence facilitates rapid and robust production of IL-6 mRNA in response to toll-like receptor (TLR) or IL-1 receptor stimuli. (Microbial infection) Rapidly degraded in activated T-cells in response to phorbol 13-acetate 12-myristate (PMA) during HIV-1 viral infection. In terms of processing, ubiquitinated; ubiquitination is induced in response to interleukin IL1 receptor stimuli in a IKBKB/IKKB and IRAK1-dependent manner, leading to proteasome-mediated degradation. Post-translationally, proteolytically cleaved between Arg-111 and Arg-214 by MALT1 in activated T-cells; cleavage at Arg-111 is critical for promoting ZC3H12A degradation in response to T-cell receptor (TCR) stimulation, and hence is necessary for prolonging the stability of a set of mRNAs controlling T-cell activation and Th17 cell differentiation. In terms of tissue distribution, expressed in heart, placenta, spleen, kidney, liver and lung. Expressed in leukocytes. Expressed in monocyte.

The protein resides in the nucleus. It is found in the cytoplasm. Its subcellular location is the P-body. It localises to the rough endoplasmic reticulum membrane. The protein localises to the cytoplasmic granule. Endoribonuclease involved in various biological functions such as cellular inflammatory response and immune homeostasis, glial differentiation of neuroprogenitor cells, cell death of cardiomyocytes, adipogenesis and angiogenesis. Functions as an endoribonuclease involved in mRNA decay. Modulates the inflammatory response by promoting the degradation of a set of translationally active cytokine-induced inflammation-related mRNAs, such as IL6 and IL12B, during the early phase of inflammation. Prevents aberrant T-cell-mediated immune reaction by degradation of multiple mRNAs controlling T-cell activation, such as those encoding cytokines (IL6 and IL2), cell surface receptors (ICOS, TNFRSF4 and TNFR2) and transcription factor (REL). Inhibits cooperatively with ZC3H12A the differentiation of helper T cells Th17 in lungs. They repress target mRNA encoding the Th17 cell-promoting factors IL6, ICOS, REL, IRF4, NFKBID and NFKBIZ. The cooperation requires RNA-binding by RC3H1 and the nuclease activity of ZC3H12A. Together with RC3H1, destabilizes TNFRSF4/OX40 mRNA by binding to the conserved stem loop structure in its 3'UTR. Self regulates by destabilizing its own mRNA. Cleaves mRNA harboring a stem-loop (SL), often located in their 3'-UTRs, during the early phase of inflammation in a helicase UPF1-dependent manner. Plays a role in the inhibition of microRNAs (miRNAs) biogenesis. Cleaves the terminal loop of a set of precursor miRNAs (pre-miRNAs) important for the regulation of the inflammatory response leading to their degradation, and thus preventing the biosynthesis of mature miRNAs. Also plays a role in promoting angiogenesis in response to inflammatory cytokines by inhibiting the production of antiangiogenic microRNAs via its anti-dicer RNase activity. Affects the overall ubiquitination of cellular proteins. Positively regulates deubiquitinase activity promoting the cleavage at 'Lys-48'- and 'Lys-63'-linked polyubiquitin chains on TNF receptor-associated factors (TRAFs), preventing JNK and NF-kappa-B signaling pathway activation, and hence negatively regulating macrophage-mediated inflammatory response and immune homeostasis. Also induces deubiquitination of the transcription factor HIF1A, probably leading to its stabilization and nuclear import, thereby positively regulating the expression of proangiogenic HIF1A-targeted genes. Involved in a TANK-dependent negative feedback response to attenuate NF-kappaB activation through the deubiquitination of IKBKG or TRAF6 in response to interleukin-1-beta (IL1B) stimulation or upon DNA damage. Prevents stress granule (SGs) formation and promotes macrophage apoptosis under stress conditions, including arsenite-induced oxidative stress, heat shock and energy deprivation. Plays a role in the regulation of macrophage polarization; promotes IL4-induced polarization of macrophages M1 into anti-inflammatory M2 state. May also act as a transcription factor that regulates the expression of multiple genes involved in inflammatory response, angiogenesis, adipogenesis and apoptosis. Functions as a positive regulator of glial differentiation of neuroprogenitor cells through an amyloid precursor protein (APP)-dependent signaling pathway. Attenuates septic myocardial contractile dysfunction in response to lipopolysaccharide (LPS) by reducing I-kappa-B-kinase (IKK)-mediated NF-kappa-B activation, and hence myocardial pro-inflammatory cytokine production. In terms of biological role, (Microbial infection) Binds to Japanese encephalitis virus (JEV) and Dengue virus (DEN) RNAs. Its function is as follows. (Microbial infection) Exhibits antiviral activity against HIV-1 in lymphocytes by decreasing the abundance of HIV-1 viral RNA species. This is Endoribonuclease ZC3H12A from Homo sapiens (Human).